Consider the following 305-residue polypeptide: Tyrosine recombinase XerC (305 aa).

The Core-binding (CB) domain maps to 1–84 (MNEVFESYLT…TLRGFYKYAL (84 aa)). One can recognise a Tyr recombinase domain in the interval 105–299 (KLPVFMFPKQ…TAEQLQNLYK (195 aa)). Residues Arg146, Lys170, His251, Arg254, and His277 contribute to the active site. Tyr286 (O-(3'-phospho-DNA)-tyrosine intermediate) is an active-site residue.

It belongs to the 'phage' integrase family. XerC subfamily. In terms of assembly, forms a cyclic heterotetrameric complex composed of two molecules of XerC and two molecules of XerD.

Its subcellular location is the cytoplasm. In terms of biological role, site-specific tyrosine recombinase, which acts by catalyzing the cutting and rejoining of the recombining DNA molecules. The XerC-XerD complex is essential to convert dimers of the bacterial chromosome into monomers to permit their segregation at cell division. It also contributes to the segregational stability of plasmids. The sequence is that of Tyrosine recombinase XerC from Treponema denticola (strain ATCC 35405 / DSM 14222 / CIP 103919 / JCM 8153 / KCTC 15104).